Here is a 163-residue protein sequence, read N- to C-terminus: 2-C-methyl-D-erythritol 2,4-cyclodiphosphate synthase (163 aa).

2 residues coordinate a divalent metal cation: D12 and H14. 4-CDP-2-C-methyl-D-erythritol 2-phosphate is bound by residues 12-14 (DVH) and 38-39 (HS). H46 contacts a divalent metal cation. 4-CDP-2-C-methyl-D-erythritol 2-phosphate contacts are provided by residues 60–62 (DIG), 65–69 (FPDTD), 136–139 (TTTE), F143, and R146.

This sequence belongs to the IspF family. Homotrimer. A divalent metal cation serves as cofactor.

The enzyme catalyses 4-CDP-2-C-methyl-D-erythritol 2-phosphate = 2-C-methyl-D-erythritol 2,4-cyclic diphosphate + CMP. The protein operates within isoprenoid biosynthesis; isopentenyl diphosphate biosynthesis via DXP pathway; isopentenyl diphosphate from 1-deoxy-D-xylulose 5-phosphate: step 4/6. Functionally, involved in the biosynthesis of isopentenyl diphosphate (IPP) and dimethylallyl diphosphate (DMAPP), two major building blocks of isoprenoid compounds. Catalyzes the conversion of 4-diphosphocytidyl-2-C-methyl-D-erythritol 2-phosphate (CDP-ME2P) to 2-C-methyl-D-erythritol 2,4-cyclodiphosphate (ME-CPP) with a corresponding release of cytidine 5-monophosphate (CMP). The sequence is that of 2-C-methyl-D-erythritol 2,4-cyclodiphosphate synthase from Acinetobacter baylyi (strain ATCC 33305 / BD413 / ADP1).